We begin with the raw amino-acid sequence, 116 residues long: Small ribosomal subunit protein uS8c (116 aa).

Belongs to the universal ribosomal protein uS8 family. In terms of assembly, part of the 30S ribosomal subunit.

It localises to the plastid. The protein resides in the chloroplast. One of the primary rRNA binding proteins, it binds directly to 16S rRNA central domain where it helps coordinate assembly of the platform of the 30S subunit. The chain is Small ribosomal subunit protein uS8c (rps8) from Musa acuminata (Banana).